A 310-amino-acid polypeptide reads, in one-letter code: Olfactory receptor 9A2 (310 aa).

The Extracellular portion of the chain corresponds to 1–24; that stretch reads MMDNHSSATEFHLLGFPGSQGLHH. Asparagine 4 is a glycosylation site (N-linked (GlcNAc...) asparagine). Residues 25–45 traverse the membrane as a helical segment; that stretch reads ILFAIFFFFYLVTLMGNTVII. Over 46–53 the chain is Cytoplasmic; it reads VIVCVDKR. Residues 54-74 traverse the membrane as a helical segment; it reads LQSPMYFFLSHLSTLEILVTT. The Extracellular segment spans residues 75-98; sequence IIVPMMLWGLLFLGCRQYLSLHVS. The Cytoplasmic portion of the chain corresponds to 117-135; that stretch reads DRYVAVCNPLRYNIIMNSS. A helical membrane pass occupies residues 136 to 156; sequence TCIWVVIVSWVFGFLSEIWPI. At 157-193 the chain is on the extracellular side; sequence YATFQFTFRKSNSLDHFYCDRGQLLKLSCDNTLLTEF. The chain crosses the membrane as a helical span at residues 194-213; it reads ILFLMAVFILIGSLIPTIVS. The Cytoplasmic segment spans residues 214 to 233; it reads YTYIISTILKIPSASGRRKA. The helical transmembrane segment at 234-254 threads the bilayer; the sequence is FSTFASHFTCVVIGYGSCLFL. The Extracellular portion of the chain corresponds to 255–267; that stretch reads YVKPKQTQGVEYN. The chain crosses the membrane as a helical span at residues 268–288; that stretch reads KIVSLLVSVLTPFLNPFIFTL. Residues 289-310 are Cytoplasmic-facing; sequence RNDKVKEALRDGMKRCCQLLKD.

This sequence belongs to the G-protein coupled receptor 1 family.

The protein resides in the cell membrane. Its function is as follows. Odorant receptor. This Homo sapiens (Human) protein is Olfactory receptor 9A2 (OR9A2).